A 314-amino-acid chain; its full sequence is 4-hydroxy-3-methylbut-2-enyl diphosphate reductase (314 aa).

[4Fe-4S] cluster is bound at residue C12. (2E)-4-hydroxy-3-methylbut-2-enyl diphosphate is bound by residues H41 and H74. Dimethylallyl diphosphate is bound by residues H41 and H74. H41 and H74 together coordinate isopentenyl diphosphate. C96 contacts [4Fe-4S] cluster. H124 is a (2E)-4-hydroxy-3-methylbut-2-enyl diphosphate binding site. H124 is a dimethylallyl diphosphate binding site. H124 is a binding site for isopentenyl diphosphate. E126 functions as the Proton donor in the catalytic mechanism. (2E)-4-hydroxy-3-methylbut-2-enyl diphosphate is bound at residue T167. [4Fe-4S] cluster is bound at residue C197. S225, S226, N227, and S269 together coordinate (2E)-4-hydroxy-3-methylbut-2-enyl diphosphate. 4 residues coordinate dimethylallyl diphosphate: S225, S226, N227, and S269. 4 residues coordinate isopentenyl diphosphate: S225, S226, N227, and S269.

The protein belongs to the IspH family. Requires [4Fe-4S] cluster as cofactor.

It catalyses the reaction isopentenyl diphosphate + 2 oxidized [2Fe-2S]-[ferredoxin] + H2O = (2E)-4-hydroxy-3-methylbut-2-enyl diphosphate + 2 reduced [2Fe-2S]-[ferredoxin] + 2 H(+). The catalysed reaction is dimethylallyl diphosphate + 2 oxidized [2Fe-2S]-[ferredoxin] + H2O = (2E)-4-hydroxy-3-methylbut-2-enyl diphosphate + 2 reduced [2Fe-2S]-[ferredoxin] + 2 H(+). It functions in the pathway isoprenoid biosynthesis; dimethylallyl diphosphate biosynthesis; dimethylallyl diphosphate from (2E)-4-hydroxy-3-methylbutenyl diphosphate: step 1/1. Its pathway is isoprenoid biosynthesis; isopentenyl diphosphate biosynthesis via DXP pathway; isopentenyl diphosphate from 1-deoxy-D-xylulose 5-phosphate: step 6/6. In terms of biological role, catalyzes the conversion of 1-hydroxy-2-methyl-2-(E)-butenyl 4-diphosphate (HMBPP) into a mixture of isopentenyl diphosphate (IPP) and dimethylallyl diphosphate (DMAPP). Acts in the terminal step of the DOXP/MEP pathway for isoprenoid precursor biosynthesis. This is 4-hydroxy-3-methylbut-2-enyl diphosphate reductase from Idiomarina loihiensis (strain ATCC BAA-735 / DSM 15497 / L2-TR).